Consider the following 361-residue polypeptide: 4-hydroxytryptamine kinase (361 aa).

ATP contacts are provided by residues asparagine 37, lysine 57, and 118–120 (QDV). The active site involves aspartate 224. 248 to 250 (DWE) provides a ligand contact to ATP.

This sequence belongs to the methylthioribose kinase family. As to quaternary structure, monomer. It depends on Mg(2+) as a cofactor.

The catalysed reaction is 4-hydroxytryptamine + ATP = norbaeocystin + ADP + H(+). The enzyme catalyses psilocin + ATP = psilocybin + ADP + H(+). It catalyses the reaction 4-hydroxy-N,N,N-trimethyltryptamine + ATP = aeruginascin + ADP + H(+). The protein operates within secondary metabolite biosynthesis. In terms of biological role, 4-hydroxytryptamine kinase; part of the gene cluster that mediates the biosynthesis of psilocybin, a psychotropic tryptamine-derived natural product. The first step in the pathway is the decarboxylation of L-tryptophan to tryptamine by the decarboxylase psiD. PsiD does not decarboxylate phenylalanine, tyrosine, or 5-hydroxy- L -tryptophan (5-HTP). 4-hydroxy-L-tryptophan is accepted as substrate by psiD as well. The cytochrome P450 monooxygenase psiH then converts tryptamine to 4-hydroxytryptamine. The kinase psiK catalyzes the 4-O-phosphorylation step by converting 4-hydroxytryptamine into norbaeocystin. The methyltransferase psiM then catalyzes iterative methyl transfer to the amino group of norbaeocystin to yield psilocybin via a monomethylated intermediate, baeocystin. 4-hydroxy-6-methyl-l-tryptophancan also be converted the decarboxylase PsiD, kinase PsiK, and methyltransferase PsiM into respectively 6-methyl-norbaeocystin, 6-methylbaeocystin, and 6-methylpsilocybin. PsiK kinase can also turn psilocin into psilocybin. This activity may represent a protective mechanism to rephosphorylate the unstable psilocin to the stable psilocybin in case of intracellular ester cleavage. Moreover, psiK is able to O-phosphorylate the quaternary amine 4-hydroxy-N,N,N-trimethyltryptamine (4-OH-TMT) to yield aeruginascin, another bioactive compound found in Psilocybe species. The sequence is that of 4-hydroxytryptamine kinase from Psilocybe cyanescens.